The chain runs to 299 residues: tRNA-cytidine(32) 2-sulfurtransferase (299 aa).

Residues serine 49–serine 54 carry the PP-loop motif motif. [4Fe-4S] cluster contacts are provided by cysteine 124, cysteine 127, and cysteine 215.

The protein belongs to the TtcA family. As to quaternary structure, homodimer. It depends on Mg(2+) as a cofactor. [4Fe-4S] cluster serves as cofactor.

It localises to the cytoplasm. The catalysed reaction is cytidine(32) in tRNA + S-sulfanyl-L-cysteinyl-[cysteine desulfurase] + AH2 + ATP = 2-thiocytidine(32) in tRNA + L-cysteinyl-[cysteine desulfurase] + A + AMP + diphosphate + H(+). Its pathway is tRNA modification. Catalyzes the ATP-dependent 2-thiolation of cytidine in position 32 of tRNA, to form 2-thiocytidine (s(2)C32). The sulfur atoms are provided by the cysteine/cysteine desulfurase (IscS) system. The sequence is that of tRNA-cytidine(32) 2-sulfurtransferase from Deinococcus radiodurans (strain ATCC 13939 / DSM 20539 / JCM 16871 / CCUG 27074 / LMG 4051 / NBRC 15346 / NCIMB 9279 / VKM B-1422 / R1).